A 47-amino-acid chain; its full sequence is Potamin-1 (47 aa).

3 cysteine pairs are disulfide-bonded: Cys3/Cys40, Cys6/Cys24, and Cys7/Cys36.

Inhibitor of serine proteases chymotrypsin, papain and trypsin. Has strong antifungal activity against C.albicans and R.solani. Has antibacterial activity against the Gram-positive bacterium C.michiganense, but lacks antibacterial activity against the Gram-positive bacterium S.aureus. Lacks hemolytic activity against human erythrocytes. This chain is Potamin-1, found in Solanum tuberosum (Potato).